Reading from the N-terminus, the 379-residue chain is Probable leucine aminopeptidase ARB_01443 (379 aa).

The first 18 residues, 1 to 18 (MKIATLAVVSAFAATAIA), serve as a signal peptide directing secretion. 2 residues coordinate Zn(2+): H182 and D201. 2 N-linked (GlcNAc...) asparagine glycosylation sites follow: N202 and N226. Residues E240 and D267 each coordinate Zn(2+). Cysteines 312 and 316 form a disulfide. H345 lines the Zn(2+) pocket.

It belongs to the peptidase M28 family. M28E subfamily. Monomer. Zn(2+) serves as cofactor.

It localises to the secreted. Its function is as follows. Probable extracellular aminopeptidase which contributes to pathogenicity. The polypeptide is Probable leucine aminopeptidase ARB_01443 (Arthroderma benhamiae (strain ATCC MYA-4681 / CBS 112371) (Trichophyton mentagrophytes)).